Reading from the N-terminus, the 494-residue chain is Sulfate adenylyltransferase subunit 1 (494 aa).

Residues 28 to 242 form the tr-type G domain; that stretch reads TRPLRLITCG…TLELATVRST (215 aa). The interval 37 to 44 is G1; that stretch reads GSVDDGKS. Position 37–44 (37–44) interacts with GTP; sequence GSVDDGKS. Residues 94–98 are G2; sequence GITID. Residues 115–118 are G3; it reads DTPG. GTP-binding positions include 115–119 and 170–173; these read DTPGH and NKID. The tract at residues 170–173 is G4; it reads NKID. The segment at 207-209 is G5; that stretch reads SAL.

This sequence belongs to the TRAFAC class translation factor GTPase superfamily. Classic translation factor GTPase family. CysN/NodQ subfamily. As to quaternary structure, heterodimer composed of CysD, the smaller subunit, and CysN.

The enzyme catalyses sulfate + ATP + H(+) = adenosine 5'-phosphosulfate + diphosphate. It functions in the pathway sulfur metabolism; hydrogen sulfide biosynthesis; sulfite from sulfate: step 1/3. In terms of biological role, with CysD forms the ATP sulfurylase (ATPS) that catalyzes the adenylation of sulfate producing adenosine 5'-phosphosulfate (APS) and diphosphate, the first enzymatic step in sulfur assimilation pathway. APS synthesis involves the formation of a high-energy phosphoric-sulfuric acid anhydride bond driven by GTP hydrolysis by CysN coupled to ATP hydrolysis by CysD. The sequence is that of Sulfate adenylyltransferase subunit 1 from Agrobacterium fabrum (strain C58 / ATCC 33970) (Agrobacterium tumefaciens (strain C58)).